The following is a 193-amino-acid chain: Acyl carrier protein phosphodiesterase (193 aa).

This sequence belongs to the AcpH family.

It carries out the reaction holo-[ACP] + H2O = apo-[ACP] + (R)-4'-phosphopantetheine + H(+). Its function is as follows. Converts holo-ACP to apo-ACP by hydrolytic cleavage of the phosphopantetheine prosthetic group from ACP. This is Acyl carrier protein phosphodiesterase from Escherichia coli O6:H1 (strain CFT073 / ATCC 700928 / UPEC).